A 235-amino-acid polypeptide reads, in one-letter code: Enolase-phosphatase E1 (235 aa).

Mg(2+) is bound by residues D10 and E12. Substrate contacts are provided by residues 130–131 (SS) and K169. D194 contributes to the Mg(2+) binding site.

The protein belongs to the HAD-like hydrolase superfamily. MasA/MtnC family. In terms of assembly, monomer. It depends on Mg(2+) as a cofactor.

It is found in the cytoplasm. It localises to the nucleus. The enzyme catalyses 5-methylsulfanyl-2,3-dioxopentyl phosphate + H2O = 1,2-dihydroxy-5-(methylsulfanyl)pent-1-en-3-one + phosphate. It participates in amino-acid biosynthesis; L-methionine biosynthesis via salvage pathway; L-methionine from S-methyl-5-thio-alpha-D-ribose 1-phosphate: step 3/6. It functions in the pathway amino-acid biosynthesis; L-methionine biosynthesis via salvage pathway; L-methionine from S-methyl-5-thio-alpha-D-ribose 1-phosphate: step 4/6. Bifunctional enzyme that catalyzes the enolization of 2,3-diketo-5-methylthiopentyl-1-phosphate (DK-MTP-1-P) into the intermediate 2-hydroxy-3-keto-5-methylthiopentenyl-1-phosphate (HK-MTPenyl-1-P), which is then dephosphorylated to form the acireductone 1,2-dihydroxy-3-keto-5-methylthiopentene (DHK-MTPene). This Komagataella phaffii (strain GS115 / ATCC 20864) (Yeast) protein is Enolase-phosphatase E1.